We begin with the raw amino-acid sequence, 734 residues long: Photosystem I P700 chlorophyll a apoprotein A2 (734 aa).

The next 8 membrane-spanning stretches (helical) occupy residues 46 to 69 (IFASHFGQLAIIFLWTSGNLFHVA), 135 to 158 (LYTGALFLLFLSVISLLGGWLHLQ), 175 to 199 (LNHHLSGLFGVSSLAWTGHLVHVAI), 273 to 291 (MAHHHLAIAFVFLVAGHMY), 330 to 353 (LHFQLGLALASLGVITSLVAQHMY), 369 to 395 (AALYTHHQYIAGFIMTGAFAHGAIFFI), 417 to 439 (AIISHLSWASLFLGFHTLGLYVH), and 517 to 535 (FLVHHAIALGLHTTTLILV). 2 residues coordinate [4Fe-4S] cluster: C559 and C568. A run of 2 helical transmembrane segments spans residues 575–596 (AFYLAVFWMLNTIGWVTFYWHW) and 643–665 (LSVWAWMFLFGHLVWATGFMFLI). H654, M662, and Y670 together coordinate chlorophyll a. Residue W671 coordinates phylloquinone. The helical transmembrane segment at 707–727 (LVGLAHFSVGYIFTYAAFLIA) threads the bilayer.

This sequence belongs to the PsaA/PsaB family. As to quaternary structure, the PsaA/B heterodimer binds the P700 chlorophyll special pair and subsequent electron acceptors. PSI consists of a core antenna complex that captures photons, and an electron transfer chain that converts photonic excitation into a charge separation. The eukaryotic PSI reaction center is composed of at least 11 subunits. It depends on P700 is a chlorophyll a/chlorophyll a' dimer, A0 is one or more chlorophyll a, A1 is one or both phylloquinones and FX is a shared 4Fe-4S iron-sulfur center. as a cofactor.

It is found in the plastid. Its subcellular location is the chloroplast thylakoid membrane. It catalyses the reaction reduced [plastocyanin] + hnu + oxidized [2Fe-2S]-[ferredoxin] = oxidized [plastocyanin] + reduced [2Fe-2S]-[ferredoxin]. Its function is as follows. PsaA and PsaB bind P700, the primary electron donor of photosystem I (PSI), as well as the electron acceptors A0, A1 and FX. PSI is a plastocyanin-ferredoxin oxidoreductase, converting photonic excitation into a charge separation, which transfers an electron from the donor P700 chlorophyll pair to the spectroscopically characterized acceptors A0, A1, FX, FA and FB in turn. Oxidized P700 is reduced on the lumenal side of the thylakoid membrane by plastocyanin. The protein is Photosystem I P700 chlorophyll a apoprotein A2 of Spinacia oleracea (Spinach).